The following is an 82-amino-acid chain: Mu-conotoxin MrVIA (82 aa).

The N-terminal stretch at 1-22 is a signal peptide; that stretch reads MKLTCMMIVAVLFLTAWTLVMA. Positions 23-49 are excised as a propeptide; that stretch reads DDSNNGLANHFSKSRDEMEDPEASKLE. 3 disulfide bridges follow: Cys-53-Cys-71, Cys-60-Cys-76, and Cys-70-Cys-81.

In terms of tissue distribution, expressed by the venom duct.

Its subcellular location is the secreted. Its function is as follows. MuO-conotoxins are gating-modifier toxins that inhibit sodium current by trapping the domain II voltage sensor in the closed position to prevent opening of the sodium channel. This toxin inhibits rNav1.2/SCN2A (IC(50)=532 nM), rNav1.4/SCN4A (IC(50)=438 nM) and rNav1.7/SCN9A (IC(50)=345 nM). It blocks Nav channels by interacting mainly with the C-terminal part of the pore loop of domain-3. It does not bind on site 1. At small concentration, this toxin also acts as a calcium current agonist, whereas at higher doses it blocks fast-inactivating calcium current. This is Mu-conotoxin MrVIA from Conus marmoreus (Marble cone).